Here is a 117-residue protein sequence, read N- to C-terminus: NADH-quinone oxidoreductase subunit A (117 aa).

3 helical membrane passes run 4 to 24 (WIGV…GMLT), 64 to 84 (LMFV…VSFV), and 86 to 106 (LGLA…LGLW).

The protein belongs to the complex I subunit 3 family. As to quaternary structure, NDH-1 is composed of 14 different subunits. Subunits NuoA, H, J, K, L, M, N constitute the membrane sector of the complex.

It localises to the cell membrane. It catalyses the reaction a quinone + NADH + 5 H(+)(in) = a quinol + NAD(+) + 4 H(+)(out). In terms of biological role, NDH-1 shuttles electrons from NADH, via FMN and iron-sulfur (Fe-S) centers, to quinones in the respiratory chain. The immediate electron acceptor for the enzyme in this species is believed to be a menaquinone. Couples the redox reaction to proton translocation (for every two electrons transferred, four hydrogen ions are translocated across the cytoplasmic membrane), and thus conserves the redox energy in a proton gradient. This chain is NADH-quinone oxidoreductase subunit A, found in Desulforamulus reducens (strain ATCC BAA-1160 / DSM 100696 / MI-1) (Desulfotomaculum reducens).